The primary structure comprises 527 residues: Bifunctional purine biosynthesis protein PurH (527 aa).

The 149-residue stretch at 1-149 (MTADLLPVRR…KNFARVAVAT (149 aa)) folds into the MGS-like domain.

This sequence belongs to the PurH family.

It catalyses the reaction (6R)-10-formyltetrahydrofolate + 5-amino-1-(5-phospho-beta-D-ribosyl)imidazole-4-carboxamide = 5-formamido-1-(5-phospho-D-ribosyl)imidazole-4-carboxamide + (6S)-5,6,7,8-tetrahydrofolate. The catalysed reaction is IMP + H2O = 5-formamido-1-(5-phospho-D-ribosyl)imidazole-4-carboxamide. It functions in the pathway purine metabolism; IMP biosynthesis via de novo pathway; 5-formamido-1-(5-phospho-D-ribosyl)imidazole-4-carboxamide from 5-amino-1-(5-phospho-D-ribosyl)imidazole-4-carboxamide (10-formyl THF route): step 1/1. It participates in purine metabolism; IMP biosynthesis via de novo pathway; IMP from 5-formamido-1-(5-phospho-D-ribosyl)imidazole-4-carboxamide: step 1/1. The polypeptide is Bifunctional purine biosynthesis protein PurH (Stenotrophomonas maltophilia (strain R551-3)).